Reading from the N-terminus, the 447-residue chain is Glycerol-3-phosphate acyltransferase ATS11, chloroplastic (447 aa).

The segment at 1–21 is disordered; that stretch reads MFILSSSSSLPSPLSLSSSRV. The N-terminal 48 residues, 1–48, are a transit peptide targeting the chloroplast; that stretch reads MFILSSSSSLPSPLSLSSSRVSLPPPSSSSLNLLPLSPHFQPPNLACS. The HXXXXD motif signature appears at 217-222; sequence HQTEAD.

Belongs to the GPAT/DAPAT family.

It localises to the plastid. The protein localises to the chloroplast stroma. It catalyses the reaction a fatty acyl-[ACP] + sn-glycerol 3-phosphate = a 1-acyl-sn-glycero-3-phosphate + holo-[ACP]. The enzyme catalyses sn-glycerol 3-phosphate + an acyl-CoA = a 1-acyl-sn-glycero-3-phosphate + CoA. It participates in phospholipid metabolism; CDP-diacylglycerol biosynthesis; CDP-diacylglycerol from sn-glycerol 3-phosphate: step 1/3. In terms of biological role, esterifies the acyl-group from acyl-acyl carrier proteins (acyl-ACPs) to the sn-1 position of glycerol-3-phosphate. The physiological acyl donors in chloroplasts are acyl-ACPs, but acyl-CoAs are used as artificial donor for in vitro reactions. The enzyme from chilling-resistant plants discriminates against non-fluid palmitic acid and selects oleic acid whereas the enzyme from sensitive plants accepts both fatty acids. Squash is chilling-sensitive. Preferably utilizes oleoyl groups (18:1-ACP) and has lower affinity to palmitoyl (16:0-ACP) and stearoyl groups (18:0-ACP). The sequence is that of Glycerol-3-phosphate acyltransferase ATS11, chloroplastic from Cucurbita moschata (Winter crookneck squash).